The primary structure comprises 168 residues: Myelin basic protein (168 aa).

An N-acetylalanine modification is found at Ala-1. Residues Ser-7 and Ser-12 each carry the phosphoserine modification. Tyr-14 is subject to Phosphotyrosine. Thr-17 is subject to Phosphothreonine. Ser-19 carries the post-translational modification Phosphoserine. Thr-20 carries the phosphothreonine modification. Arg-25 and Arg-31 each carry citrulline. Thr-35 is subject to Phosphothreonine. Position 40 is a phosphoserine (Ser-40). The disordered stretch occupies residues 42–84; the sequence is GRFFSSDRGAPKRGSGKDHAARTTHYGSLPQKSGHRPQDENPV. An omega-N-methylarginine mark is found at Arg-43 and Arg-49. The induces experimental autoimmune encephalomyelitis (EAE) stretch occupies residues 45-86; sequence FSSDRGAPKRGSGKDHAARTTHYGSLPQKSGHRPQDENPVVH. A Phosphoserine modification is found at Ser-56. At Thr-65 the chain carries Phosphothreonine. Tyr-67 is modified (phosphotyrosine). Ser-74 bears the Phosphoserine mark. A phosphothreonine mark is found at Thr-93 and Thr-96. Gln-101 carries the post-translational modification Deamidated glutamine; partial. At Arg-105 the chain carries Omega-N-methylarginine; alternate. Arg-105 carries the post-translational modification Symmetric dimethylarginine; alternate. Phosphoserine is present on Ser-113. Lys-120 is modified (N6-acetyllysine). The residue at position 128 (Arg-128) is a Citrulline. Gln-145 bears the Deamidated glutamine mark. Arg-157 bears the Citrulline mark. Ser-159 carries the post-translational modification Phosphoserine. Residue Ser-163 is modified to Phosphoserine; by UHMK1. Arg-168 bears the Citrulline mark.

The protein belongs to the myelin basic protein family. As to quaternary structure, homodimer. Post-translationally, as in other animals, several charge isomers may be produced as a result of optional post-translational modifications, such as phosphorylation of serine or threonine residues, deamidation of glutamine or asparagine residues, citrullination and methylation of arginine residues. Phosphorylated by TAOK2, VRK2, MAPK11, MAPK12, MAPK14 and MINK1. In terms of processing, proteolytically cleaved in B cell lysosomes by cathepsin CTSG which degrades the major immunogenic MBP epitope and prevents the activation of MBP-specific autoreactive T cells. Found in both the central and the peripheral nervous system.

Its subcellular location is the myelin membrane. Is, with PLP, the most abundant protein component of the myelin membrane in the CNS. Has a role in both the formation and stabilization of this compact multilayer arrangement of bilayers. Each splice variant and charge isomer may have a specialized function in the assembly of an optimized, biochemically functional myelin membrane. In Oryctolagus cuniculus (Rabbit), this protein is Myelin basic protein (MBP).